The chain runs to 247 residues: 5'-nucleotidase SurE (247 aa).

A divalent metal cation contacts are provided by aspartate 8, aspartate 9, serine 39, and asparagine 91.

It belongs to the SurE nucleotidase family. A divalent metal cation serves as cofactor.

The protein resides in the cytoplasm. The catalysed reaction is a ribonucleoside 5'-phosphate + H2O = a ribonucleoside + phosphate. Its function is as follows. Nucleotidase that shows phosphatase activity on nucleoside 5'-monophosphates. This is 5'-nucleotidase SurE from Azoarcus sp. (strain BH72).